Consider the following 450-residue polypeptide: Cytochrome c1 (450 aa).

Positions 1-21 (MTLRNASLTAVAALTVALAGG) are cleaved as a signal peptide. Low complexity predominate over residues 24–58 (AQDASTAPGTTAPAGSSYHTNEAAPAAADTAPAAE). A disordered region spans residues 24–210 (AQDASTAPGT…AAAQEAGDSH (187 aa)). 3 stretches are compositionally biased toward acidic residues: residues 59 to 77 (AADEPAAEEAEAGEAEVTE), 85 to 108 (PAEEPAADEPAATEEPDAEAEPAA), and 118 to 194 (APAE…EDEA). Residues Cys245, Cys248, and His249 each contribute to the heme c site. The segment at 284-305 (PETEEDRPRVPTDHFPTVSGEG) is disordered. Met373 lines the heme c pocket. The helical transmembrane segment at 421-435 (SVIFLIVLAALLYLT) threads the bilayer.

In terms of assembly, the main subunits of complex b-c1 are: cytochrome b, cytochrome c1 and the Rieske protein. Binds 1 heme c group covalently per subunit.

Its subcellular location is the cell membrane. Component of the ubiquinol-cytochrome c reductase complex (complex III or cytochrome b-c1 complex), which is a respiratory chain that generates an electrochemical potential coupled to ATP synthesis. c1 functions as an electron donor to cytochrome c. This chain is Cytochrome c1 (petC), found in Paracoccus denitrificans.